A 659-amino-acid polypeptide reads, in one-letter code: tRNA uridine 5-carboxymethylaminomethyl modification enzyme MnmG (659 aa).

An FAD-binding site is contributed by 13–18 (GGGHAG). An NAD(+)-binding site is contributed by 281–295 (GPRYCPSVEDKINRF).

The protein belongs to the MnmG family. In terms of assembly, homodimer. Heterotetramer of two MnmE and two MnmG subunits. FAD is required as a cofactor.

The protein localises to the cytoplasm. In terms of biological role, NAD-binding protein involved in the addition of a carboxymethylaminomethyl (cmnm) group at the wobble position (U34) of certain tRNAs, forming tRNA-cmnm(5)s(2)U34. This is tRNA uridine 5-carboxymethylaminomethyl modification enzyme MnmG from Delftia acidovorans (strain DSM 14801 / SPH-1).